The chain runs to 619 residues: Bifunctional glutathionylspermidine synthetase/amidase (619 aa).

The interval 2–195 (SKGTTSQDAP…LGWMIQTEDT (194 aa)) is gsp amidase. Positions 34–176 (DPQEYEDDAV…MVVENGCYTL (143 aa)) constitute a Peptidase C51 domain. A glutathionylspermidine-binding site is contributed by Gln58. The active-site S-(gamma-glutamyl-cysteinyl-glycyl)-cysteine intermediate is Cys59. Residue Cys59 is modified to Cysteine sulfenic acid (-SOH); transient. Glutathionylspermidine is bound by residues Arg64, 78 to 81 (VGMA), and Asn149. The segment at 196-205 (EYSLPQPEIA) is linker. Positions 206-619 (GELLKISGAR…DIEPLIVVKK (414 aa)) are gsp synthetase. Arg316 serves as a coordination point for glutathione. 316–318 (RMD) is an ATP binding site. Mg(2+) is bound by residues Asp318, Glu330, and Asn332. Residue Ser335 coordinates glutathione. Residue Glu391 participates in spermidine binding. 2 residues coordinate glutathione: Glu392 and Thr446. Residues Lys498, Lys533, 539 to 540 (CG), 568 to 571 (QQLW), Gln582, and 603 to 605 (LVI) each bind ATP. Position 610 (Asp610) interacts with spermidine.

It in the C-terminal section; belongs to the glutathionylspermidine synthase preATP-grasp family. In terms of assembly, homodimer. Oxidation of Cys-59 to sulfenic acid during oxidative stress selectively inhibits the amidase activity which leads to a rapid increase in the amounts of intracellular Gsp and Gsp S-thiolated proteins (GspSSPs).

The catalysed reaction is spermidine + glutathione + ATP = glutathionylspermidine + ADP + phosphate + H(+). It catalyses the reaction glutathionylspermidine + H2O = spermidine + glutathione. The protein operates within sulfur metabolism; glutathione metabolism. It functions in the pathway amine and polyamine metabolism; spermidine metabolism. When exposed to oxidative stress, Gsp amidase activity is transiently inhibited in vivo by oxidation of the catalytic Cys-59 thiol to sulfenic acid; this modification does not affect Gsp synthetase activity. Gsp amidase activity is negatively autoregulated by the Gsp synthetase domain, and is activated by the Gsp synthetase substrates, GSH and ATP-Mg(2+); the occupancy of the synthetase active site may initiate communication through the protein as manifest by the release of inhibition of the amidase activity. A tetrahedral phosphonate analog of glutathionylspermidine, designed as a mimic of the proposed tetrahedral intermediate for either reaction, inhibits the synthetase activity (Ki of 10 uM) but does not inhibit the amidase activity. Amidase activity is inhibited by iodoacetamide in vitro. Functionally, catalyzes the formation of an amide bond between glutathione (GSH) and spermidine coupled with hydrolysis of ATP; also catalyzes the opposing reaction, i.e. the hydrolysis of glutathionylspermidine (Gsp) back to glutathione and spermidine. The amidase active site can also hydrolyze Gsp-disulfide (Gsp-S-S-Gsp) to Gsp-SG and Gsp S-thiolated proteins (GspSSPs) to GSH S-thiolated protein (GSSPs). Likely acts synergistically with glutaredoxin to regulate the redox environment of E.coli and defend against oxidative damage. In vitro, the amidase active site also catalyzes hydrolysis of amide and ester derivatives of glutathione (e.g. glutathione ethyl ester and glutathione amide) but lacks activity toward acetylspermidine (N1 and N8) and acetylspermine (N1). The polypeptide is Bifunctional glutathionylspermidine synthetase/amidase (gss) (Escherichia coli (strain K12)).